We begin with the raw amino-acid sequence, 162 residues long: NADH-quinone oxidoreductase subunit I (162 aa).

4Fe-4S ferredoxin-type domains lie at 54 to 83 (RRYENGEERCIACKLCEAVCPALAITIESE) and 93 to 122 (TRYDIDLTKCIFCGFCEESCPVDSIVETQI). The [4Fe-4S] cluster site is built by Cys63, Cys66, Cys69, Cys73, Cys102, Cys105, Cys108, and Cys112.

The protein belongs to the complex I 23 kDa subunit family. In terms of assembly, NDH-1 is composed of 14 different subunits. Subunits NuoA, H, J, K, L, M, N constitute the membrane sector of the complex. [4Fe-4S] cluster serves as cofactor.

The protein localises to the cell inner membrane. The enzyme catalyses a quinone + NADH + 5 H(+)(in) = a quinol + NAD(+) + 4 H(+)(out). NDH-1 shuttles electrons from NADH, via FMN and iron-sulfur (Fe-S) centers, to quinones in the respiratory chain. The immediate electron acceptor for the enzyme in this species is believed to be ubiquinone. Couples the redox reaction to proton translocation (for every two electrons transferred, four hydrogen ions are translocated across the cytoplasmic membrane), and thus conserves the redox energy in a proton gradient. The chain is NADH-quinone oxidoreductase subunit I from Burkholderia cenocepacia (strain HI2424).